Here is a 245-residue protein sequence, read N- to C-terminus: Oncostatin-M (245 aa).

An N-terminal signal peptide occupies residues 1 to 26 (MGAQRMQRTLLSLVLRLLLLCTVATG). Cystine bridges form between Cys28-Cys135 and Cys71-Cys177. Asn97 is a glycosylation site (N-linked (GlcNAc...) asparagine). Disordered stretches follow at residues 143-171 (SSDP…STFQ) and 197-245 (WGER…APAR). Positions 153–166 (QPGPGPTPLPPTPP) are enriched in pro residues. Residues 203 to 218 (RSRRHSPCRALKRGAR) are compositionally biased toward basic residues. Positions 207-245 (HSPCRALKRGARRTQPFPEIRRLAPRGQPPGSLWGAPAR) are excised as a propeptide.

Belongs to the LIF/OSM family. Propeptide processing is not important for receptor binding activity but may be important growth-inhibitory activity.

The protein localises to the secreted. In terms of biological role, growth regulator. Inhibits the proliferation of a number of tumor cell lines. It regulates cytokine production, including IL-6, G-CSF and GM-CSF from endothelial cells. Uses both type I OSM receptor (heterodimers composed of LIFR and IL6ST) and type II OSM receptor (heterodimers composed of OSMR and IL6ST). Involved in the maturation of fetal hepatocytes, thereby promoting liver development and regeneration. This chain is Oncostatin-M (OSM), found in Bos taurus (Bovine).